Reading from the N-terminus, the 513-residue chain is Bifunctional purine biosynthesis protein PurH (513 aa).

The MGS-like domain maps to 1 to 146 (MPRFALLSVS…KNHAHLTILT (146 aa)).

Belongs to the PurH family.

The catalysed reaction is (6R)-10-formyltetrahydrofolate + 5-amino-1-(5-phospho-beta-D-ribosyl)imidazole-4-carboxamide = 5-formamido-1-(5-phospho-D-ribosyl)imidazole-4-carboxamide + (6S)-5,6,7,8-tetrahydrofolate. The enzyme catalyses IMP + H2O = 5-formamido-1-(5-phospho-D-ribosyl)imidazole-4-carboxamide. It functions in the pathway purine metabolism; IMP biosynthesis via de novo pathway; 5-formamido-1-(5-phospho-D-ribosyl)imidazole-4-carboxamide from 5-amino-1-(5-phospho-D-ribosyl)imidazole-4-carboxamide (10-formyl THF route): step 1/1. It participates in purine metabolism; IMP biosynthesis via de novo pathway; IMP from 5-formamido-1-(5-phospho-D-ribosyl)imidazole-4-carboxamide: step 1/1. This Synechococcus elongatus (strain ATCC 33912 / PCC 7942 / FACHB-805) (Anacystis nidulans R2) protein is Bifunctional purine biosynthesis protein PurH.